The chain runs to 89 residues: UPF0223 protein Bcer98_2663 (89 aa).

The protein belongs to the UPF0223 family.

In Bacillus cytotoxicus (strain DSM 22905 / CIP 110041 / 391-98 / NVH 391-98), this protein is UPF0223 protein Bcer98_2663.